We begin with the raw amino-acid sequence, 188 residues long: Putative 3-methyladenine DNA glycosylase (188 aa).

This sequence belongs to the DNA glycosylase MPG family.

The chain is Putative 3-methyladenine DNA glycosylase from Ehrlichia ruminantium (strain Welgevonden).